A 309-amino-acid polypeptide reads, in one-letter code: Aspartate carbamoyltransferase catalytic subunit (309 aa).

Carbamoyl phosphate contacts are provided by arginine 49 and threonine 50. Position 77 (lysine 77) interacts with L-aspartate. 3 residues coordinate carbamoyl phosphate: arginine 99, histidine 127, and glutamine 130. L-aspartate-binding residues include arginine 160 and arginine 211. Carbamoyl phosphate contacts are provided by alanine 252 and proline 253.

Belongs to the aspartate/ornithine carbamoyltransferase superfamily. ATCase family. In terms of assembly, heterododecamer (2C3:3R2) of six catalytic PyrB chains organized as two trimers (C3), and six regulatory PyrI chains organized as three dimers (R2).

The enzyme catalyses carbamoyl phosphate + L-aspartate = N-carbamoyl-L-aspartate + phosphate + H(+). Its pathway is pyrimidine metabolism; UMP biosynthesis via de novo pathway; (S)-dihydroorotate from bicarbonate: step 2/3. In terms of biological role, catalyzes the condensation of carbamoyl phosphate and aspartate to form carbamoyl aspartate and inorganic phosphate, the committed step in the de novo pyrimidine nucleotide biosynthesis pathway. The polypeptide is Aspartate carbamoyltransferase catalytic subunit (Geobacillus sp. (strain WCH70)).